Reading from the N-terminus, the 41-residue chain is CGGVDAPCDKDRPDCCSYAECLKPAGYGWWHGTYYCYRKKE.

3 cysteine pairs are disulfide-bonded: Cys1-Cys16, Cys8-Cys21, and Cys15-Cys36.

This sequence belongs to the neurotoxin 14 (magi-1) family. 08 (Ltx-4) subfamily. In terms of tissue distribution, expressed by the venom gland.

The protein localises to the secreted. Toxin that causes irreversible contractile paralysis in adult Aedes aegypti resulting in 100% mortality after 24 hours. This Lasiodora klugi (Bahia scarlet tarantula) protein is U-theraphotoxin-Lk1a.